Here is a 410-residue protein sequence, read N- to C-terminus: Multifunctional CCA protein (410 aa).

ATP-binding residues include Gly-8 and Arg-11. CTP contacts are provided by Gly-8 and Arg-11. The Mg(2+) site is built by Glu-21 and Asp-23. Residues Arg-91, Arg-137, and Arg-140 each contribute to the ATP site. Residues Arg-91, Arg-137, and Arg-140 each contribute to the CTP site. The HD domain maps to 228 to 329 (TGIHSLMTLR…VKLLEQVDAF (102 aa)).

Belongs to the tRNA nucleotidyltransferase/poly(A) polymerase family. Bacterial CCA-adding enzyme type 1 subfamily. As to quaternary structure, monomer. Can also form homodimers and oligomers. The cofactor is Mg(2+). Requires Ni(2+) as cofactor.

The enzyme catalyses a tRNA precursor + 2 CTP + ATP = a tRNA with a 3' CCA end + 3 diphosphate. It catalyses the reaction a tRNA with a 3' CCA end + 2 CTP + ATP = a tRNA with a 3' CCACCA end + 3 diphosphate. Catalyzes the addition and repair of the essential 3'-terminal CCA sequence in tRNAs without using a nucleic acid template. Adds these three nucleotides in the order of C, C, and A to the tRNA nucleotide-73, using CTP and ATP as substrates and producing inorganic pyrophosphate. tRNA 3'-terminal CCA addition is required both for tRNA processing and repair. Also involved in tRNA surveillance by mediating tandem CCA addition to generate a CCACCA at the 3' terminus of unstable tRNAs. While stable tRNAs receive only 3'-terminal CCA, unstable tRNAs are marked with CCACCA and rapidly degraded. This chain is Multifunctional CCA protein, found in Legionella pneumophila (strain Lens).